The chain runs to 391 residues: Chorismate synthase (391 aa).

Arg-48 serves as a coordination point for NADP(+). FMN-binding positions include 126-128 (RSS), Gly-287, 302-306 (KPTSS), and Arg-329.

This sequence belongs to the chorismate synthase family. FMNH2 is required as a cofactor.

The enzyme catalyses 5-O-(1-carboxyvinyl)-3-phosphoshikimate = chorismate + phosphate. It participates in metabolic intermediate biosynthesis; chorismate biosynthesis; chorismate from D-erythrose 4-phosphate and phosphoenolpyruvate: step 7/7. Catalyzes the anti-1,4-elimination of the C-3 phosphate and the C-6 proR hydrogen from 5-enolpyruvylshikimate-3-phosphate (EPSP) to yield chorismate, which is the branch point compound that serves as the starting substrate for the three terminal pathways of aromatic amino acid biosynthesis. This reaction introduces a second double bond into the aromatic ring system. The polypeptide is Chorismate synthase (Sulfolobus acidocaldarius (strain ATCC 33909 / DSM 639 / JCM 8929 / NBRC 15157 / NCIMB 11770)).